Consider the following 502-residue polypeptide: 1-aminocyclopropane-1-carboxylate synthase-like protein 1 (502 aa).

The segment at 1 to 24 is disordered; sequence MFCLPQQESTAPTTCTGSASTQDM. A substrate-binding site is contributed by glutamate 106. The residue at position 324 (lysine 324) is an N6-(pyridoxal phosphate)lysine.

It belongs to the class-I pyridoxal-phosphate-dependent aminotransferase family.

Functionally, does not catalyze the synthesis of 1-aminocyclopropane-1-carboxylate but is capable of catalyzing the deamination of L-vinylglycine. This is 1-aminocyclopropane-1-carboxylate synthase-like protein 1 (Accs) from Mus musculus (Mouse).